A 244-amino-acid chain; its full sequence is tRNA pseudouridine synthase A (244 aa).

Asp-52 (nucleophile) is an active-site residue. A substrate-binding site is contributed by Tyr-110.

The protein belongs to the tRNA pseudouridine synthase TruA family. In terms of assembly, homodimer.

The catalysed reaction is uridine(38/39/40) in tRNA = pseudouridine(38/39/40) in tRNA. Functionally, formation of pseudouridine at positions 38, 39 and 40 in the anticodon stem and loop of transfer RNAs. This is tRNA pseudouridine synthase A from Brevibacillus brevis (strain 47 / JCM 6285 / NBRC 100599).